A 946-amino-acid polypeptide reads, in one-letter code: Inter-alpha-trypsin inhibitor heavy chain H2 (946 aa).

A signal peptide spans 1-18; it reads MQRLACVLIWLFLLEEQA. Positions 19-54 are excised as a propeptide; sequence FEIPANEYSEFAGYSNLVELAPDKFPFVQENRRYQR. The 130-residue stretch at 56–185 folds into the VIT domain; sequence LPEESGEMTD…KVQFELHYQE (130 aa). Ser60 bears the Phosphoserine mark. 2 N-linked (GlcNAc...) asparagine glycosylation sites follow: Asn118 and Asn263. 2 positions are modified to 4-carboxyglutamate: Glu282 and Glu283. A VWFA domain is found at 308–468; that stretch reads PKNILFVIDV…YDFLKRLSNE (161 aa). Residue Asn445 is glycosylated (N-linked (GlcNAc...) asparagine). Ser466 is subject to Phosphoserine. Asn578 carries an N-linked (GlcNAc...) asparagine glycan. The residue at position 702 (Asp702) is an Aspartate 1-(chondroitin 4-sulfate)-ester. Positions 703-946 are excised as a propeptide; it reads PHFIIYLPKS…PQLYSFLKRP (244 aa). Ser886 is subject to Phosphoserine.

Belongs to the ITIH family. In terms of assembly, I-alpha-I plasma protease inhibitors are assembled from one or two heavy chains (HC) and one light chain, bikunin. Inter-alpha-inhibitor (I-alpha-I) is composed of ITIH1/HC1, ITIH2/HC2 and bikunin. Post-translationally, heavy chains are linked to bikunin via chondroitin 4-sulfate esterified to the alpha-carboxyl of the C-terminal aspartate after propeptide cleavage. In terms of processing, phosphorylated by FAM20C in the extracellular medium.

The protein resides in the secreted. Functionally, may act as a carrier of hyaluronan in serum or as a binding protein between hyaluronan and other matrix protein, including those on cell surfaces in tissues to regulate the localization, synthesis and degradation of hyaluronan which are essential to cells undergoing biological processes. The chain is Inter-alpha-trypsin inhibitor heavy chain H2 (ITIH2) from Mesocricetus auratus (Golden hamster).